The primary structure comprises 353 residues: Phosphate acyltransferase (353 aa).

The protein belongs to the PlsX family. In terms of assembly, homodimer. Probably interacts with PlsY.

Its subcellular location is the cytoplasm. It catalyses the reaction a fatty acyl-[ACP] + phosphate = an acyl phosphate + holo-[ACP]. Its pathway is lipid metabolism; phospholipid metabolism. In terms of biological role, catalyzes the reversible formation of acyl-phosphate (acyl-PO(4)) from acyl-[acyl-carrier-protein] (acyl-ACP). This enzyme utilizes acyl-ACP as fatty acyl donor, but not acyl-CoA. This chain is Phosphate acyltransferase, found in Afipia carboxidovorans (strain ATCC 49405 / DSM 1227 / KCTC 32145 / OM5) (Oligotropha carboxidovorans).